Here is a 267-residue protein sequence, read N- to C-terminus: Indole-3-glycerol phosphate synthase 1 (267 aa).

Belongs to the TrpC family.

It carries out the reaction 1-(2-carboxyphenylamino)-1-deoxy-D-ribulose 5-phosphate + H(+) = (1S,2R)-1-C-(indol-3-yl)glycerol 3-phosphate + CO2 + H2O. Its pathway is amino-acid biosynthesis; L-tryptophan biosynthesis; L-tryptophan from chorismate: step 4/5. The protein is Indole-3-glycerol phosphate synthase 1 (trpC1) of Ralstonia nicotianae (strain ATCC BAA-1114 / GMI1000) (Ralstonia solanacearum).